We begin with the raw amino-acid sequence, 454 residues long: Probable ECA polymerase (454 aa).

The next 11 membrane-spanning stretches (helical) occupy residues 6–26 (FSGLFIVWLLATLFIGTLTWF), 37–57 (VFFSLLFLLTFFFGFPLTSIL), 63–83 (VAVVPAEVLLQALLSAGCFYA), 122–142 (MMAVALVSVGIFFMHNGFLLF), 157–177 (GVALKRFFYFFIPAMLVVYFL), 183–203 (AWLFFLVSTVGFGLLTYMIVG), 209–229 (IIIAFAIFLFIGIIRGWISPG), 230–250 (MLAAAGVMGIVGMFWLALKRY), 343–363 (LVVMGGVWFIPPGAVVVGLII), 380–400 (YKAAILHSFCFGAIFNMIVLA), and 411–431 (VIFFMVVFGACLVVAKLIYWL).

The protein belongs to the WzyE family. In terms of assembly, probably part of a complex composed of WzxE, WzyE and WzzE.

Its subcellular location is the cell inner membrane. It participates in bacterial outer membrane biogenesis; enterobacterial common antigen biosynthesis. Functionally, probably involved in the polymerization of enterobacterial common antigen (ECA) trisaccharide repeat units. This is Probable ECA polymerase from Cronobacter sakazakii (strain ATCC BAA-894) (Enterobacter sakazakii).